The following is a 37-amino-acid chain: Large ribosomal subunit protein bL36 (37 aa).

Belongs to the bacterial ribosomal protein bL36 family.

The polypeptide is Large ribosomal subunit protein bL36 (Aliivibrio fischeri (strain ATCC 700601 / ES114) (Vibrio fischeri)).